The primary structure comprises 266 residues: Probable septum site-determining protein MinC (266 aa).

The interval 98 to 146 (ILKGGRPVSDVDVPKVEPESPPAEEKKKTGKATKASGKSDEIGETDSPQ) is disordered. Basic and acidic residues predominate over residues 109-124 (DVPKVEPESPPAEEKK).

The protein belongs to the MinC family. In terms of assembly, interacts with MinD and FtsZ.

Cell division inhibitor that blocks the formation of polar Z ring septums. Rapidly oscillates between the poles of the cell to destabilize FtsZ filaments that have formed before they mature into polar Z rings. Prevents FtsZ polymerization. The protein is Probable septum site-determining protein MinC of Allorhizobium ampelinum (strain ATCC BAA-846 / DSM 112012 / S4) (Agrobacterium vitis (strain S4)).